Here is a 172-residue protein sequence, read N- to C-terminus: Shikimate kinase (172 aa).

An ATP-binding site is contributed by G11–T16. S15 serves as a coordination point for Mg(2+). D33, R57, and G79 together coordinate substrate. R117 provides a ligand contact to ATP. Substrate is bound at residue R136. An ATP-binding site is contributed by R153.

It belongs to the shikimate kinase family. As to quaternary structure, monomer. Requires Mg(2+) as cofactor.

The protein resides in the cytoplasm. The enzyme catalyses shikimate + ATP = 3-phosphoshikimate + ADP + H(+). It functions in the pathway metabolic intermediate biosynthesis; chorismate biosynthesis; chorismate from D-erythrose 4-phosphate and phosphoenolpyruvate: step 5/7. Its function is as follows. Catalyzes the specific phosphorylation of the 3-hydroxyl group of shikimic acid using ATP as a cosubstrate. In Pseudomonas putida (strain ATCC 700007 / DSM 6899 / JCM 31910 / BCRC 17059 / LMG 24140 / F1), this protein is Shikimate kinase.